Reading from the N-terminus, the 116-residue chain is Sperm mitochondrial-associated cysteine-rich protein (116 aa).

A run of 7 repeats spans residues 6 to 13, 14 to 21, 30 to 37, 38 to 45, 46 to 53, 54 to 61, and 62 to 68. Positions 6 to 68 are 7 X 7 (OR 8) AA approximate repeats; the sequence is KHSKCCPAKG…CQPKPPCCIQ (63 aa). The interval 80-116 is disordered; the sequence is VSPLNMESEPNSPQTQDKGCQTQQQPHSPQNESRPSK. Residues 93–104 show a composition bias toward low complexity; it reads QTQDKGCQTQQQ. Over residues 105–116 the composition is skewed to polar residues; sequence PHSPQNESRPSK.

In terms of tissue distribution, testis. Is selectively expressed in the spermatids of seminiferous tubules.

It is found in the cytoplasm. The protein localises to the mitochondrion membrane. Involved in sperm motility. Its absence is associated with genetic background dependent male infertility. Infertility may be due to reduced sperm motility in the female reproductive tract and inability to penetrate the oocyte zona pellucida. The protein is Sperm mitochondrial-associated cysteine-rich protein (SMCP) of Homo sapiens (Human).